The chain runs to 334 residues: Leucine-rich repeat-containing protein 26 (334 aa).

Residues 1-26 (MRGPSWSRPRPLLLLLLLLSPWPVWA) form the signal peptide. The Extracellular portion of the chain corresponds to 27 to 261 (QVSATASPSG…HCAQPLALRD (235 aa)). The region spanning 34–71 (PSGSLGAPDCPEVCTCVPGGLASCSALSLPAVPPGLSL) is the LRRNT domain. Disulfide bonds link Cys43–Cys49 and Cys47–Cys57. LRR repeat units follow at residues 72–93 (RLRALLLDHNRVRALPPGAFAG), 96–117 (ALQRLDLRENGLHSVHVRAFWG), 120–141 (ALQLLDLSANQLEALAPGTFAP), 144–167 (ALRNLSLAGNRLARLEPAALGALP), and 168–190 (LLRSLSLQDNELAALAPGLLGRL). N-linked (GlcNAc...) asparagine glycosylation occurs at Asn147. The 55-residue stretch at 201-255 (NPWGCGCALRPLCAWLRRHPLPASEAETVLCVWPGRLTLSPLTAFSDAAFSHCAQ) folds into the LRRCT domain. Disulfide bonds link Cys205–Cys231 and Cys207–Cys253. Residues 262 to 282 (LAVVYTLGPASFLVSLASCLA) form a helical membrane-spanning segment. The Cytoplasmic portion of the chain corresponds to 283-334 (LGSGLTACRARRRRLRTAALRPPRPPDPNPDPDPHGCASPADPGSPAAAAQA). A disordered region spans residues 298–334 (RTAALRPPRPPDPNPDPDPHGCASPADPGSPAAAAQA). Residues 304–313 (PPRPPDPNPD) are compositionally biased toward pro residues. The span at 320–334 (ASPADPGSPAAAAQA) shows a compositional bias: low complexity.

As to quaternary structure, interacts with KCNMA1. Isoform 1 is expressed highly in normal prostate and salivary gland, very weakly in colon, pancreas, and intestine, and not at all in other tissues. Isoform 1 is expressed highly in many cancer cell lines and in breast cancer, pancreatic cancer and colon cancer. Isoform 2 is expressed in cancer cell lines.

Its subcellular location is the cell membrane. It localises to the cytoplasm. The protein localises to the cytoskeleton. Functionally, auxiliary protein of the large-conductance, voltage and calcium-activated potassium channel (BK alpha). Required for the conversion of BK alpha channels from a high-voltage to a low-voltage activated channel type in non-excitable cells. These are characterized by negative membrane voltages and constant low levels of calcium. The sequence is that of Leucine-rich repeat-containing protein 26 (LRRC26) from Homo sapiens (Human).